The primary structure comprises 429 residues: Trigger factor (429 aa).

In terms of domain architecture, PPIase FKBP-type spans 164–249 (GDTAVIDFEG…VKEVKTKVLP (86 aa)).

This sequence belongs to the FKBP-type PPIase family. Tig subfamily.

Its subcellular location is the cytoplasm. It carries out the reaction [protein]-peptidylproline (omega=180) = [protein]-peptidylproline (omega=0). Involved in protein export. Acts as a chaperone by maintaining the newly synthesized protein in an open conformation. Functions as a peptidyl-prolyl cis-trans isomerase. This is Trigger factor from Lysinibacillus sphaericus (strain C3-41).